The primary structure comprises 758 residues: 5-methyltetrahydropteroyltriglutamate--homocysteine methyltransferase (758 aa).

Residues Arg17–Lys20 and Lys117 contribute to the 5-methyltetrahydropteroyltri-L-glutamate site. L-homocysteine contacts are provided by residues Ile434–Ser436 and Glu487. L-methionine-binding positions include Ile434–Ser436 and Glu487. 5-methyltetrahydropteroyltri-L-glutamate is bound by residues Arg518–Cys519 and Trp564. Asp602 lines the L-homocysteine pocket. Asp602 contributes to the L-methionine binding site. Glu608 contacts 5-methyltetrahydropteroyltri-L-glutamate. Residues His644, Cys646, and Glu668 each contribute to the Zn(2+) site. His697 serves as the catalytic Proton donor. Cys729 provides a ligand contact to Zn(2+).

Belongs to the vitamin-B12 independent methionine synthase family. Zn(2+) serves as cofactor.

The catalysed reaction is 5-methyltetrahydropteroyltri-L-glutamate + L-homocysteine = tetrahydropteroyltri-L-glutamate + L-methionine. It participates in amino-acid biosynthesis; L-methionine biosynthesis via de novo pathway; L-methionine from L-homocysteine (MetE route): step 1/1. Functionally, catalyzes the transfer of a methyl group from 5-methyltetrahydrofolate to homocysteine resulting in methionine formation. This chain is 5-methyltetrahydropteroyltriglutamate--homocysteine methyltransferase, found in Yersinia pestis (strain Pestoides F).